A 549-amino-acid polypeptide reads, in one-letter code: Glucose-6-phosphate isomerase (549 aa).

Residue Glu-355 is the Proton donor of the active site. Residues His-386 and Lys-514 contribute to the active site.

It belongs to the GPI family.

The protein resides in the cytoplasm. It carries out the reaction alpha-D-glucose 6-phosphate = beta-D-fructose 6-phosphate. The protein operates within carbohydrate biosynthesis; gluconeogenesis. It functions in the pathway carbohydrate degradation; glycolysis; D-glyceraldehyde 3-phosphate and glycerone phosphate from D-glucose: step 2/4. Catalyzes the reversible isomerization of glucose-6-phosphate to fructose-6-phosphate. This Salmonella paratyphi A (strain AKU_12601) protein is Glucose-6-phosphate isomerase.